Here is a 465-residue protein sequence, read N- to C-terminus: Tetratricopeptide repeat protein 38 (465 aa).

TPR repeat units lie at residues 104–137, 176–209, and 248–281; these read REQL…HPTD, SYVK…EPTD, and CHNY…SLQA.

This sequence belongs to the TTC38 family.

This is Tetratricopeptide repeat protein 38 (Ttc38) from Mus musculus (Mouse).